Here is a 375-residue protein sequence, read N- to C-terminus: Probable disease resistance protein At1g52660 (375 aa).

The region spanning 158-372 (ENTGIIGLYG…LSNSPPNFSG (215 aa)) is the NB-ARC domain. 167-174 (GVEGVGKT) contacts ATP.

Its function is as follows. Possible disease resistance protein. In Arabidopsis thaliana (Mouse-ear cress), this protein is Probable disease resistance protein At1g52660.